We begin with the raw amino-acid sequence, 235 residues long: Phosphoribosylaminoimidazole-succinocarboxamide synthase (235 aa).

It belongs to the SAICAR synthetase family.

It carries out the reaction 5-amino-1-(5-phospho-D-ribosyl)imidazole-4-carboxylate + L-aspartate + ATP = (2S)-2-[5-amino-1-(5-phospho-beta-D-ribosyl)imidazole-4-carboxamido]succinate + ADP + phosphate + 2 H(+). The protein operates within purine metabolism; IMP biosynthesis via de novo pathway; 5-amino-1-(5-phospho-D-ribosyl)imidazole-4-carboxamide from 5-amino-1-(5-phospho-D-ribosyl)imidazole-4-carboxylate: step 1/2. This is Phosphoribosylaminoimidazole-succinocarboxamide synthase from Streptococcus agalactiae serotype Ia (strain ATCC 27591 / A909 / CDC SS700).